Consider the following 569-residue polypeptide: Isochorismate synthase 1, chloroplastic (569 aa).

The N-terminal 45 residues, 1 to 45, are a transit peptide targeting the chloroplast; that stretch reads MASLQFSSQFLGSNTKTHSSIISISRSYSPTPFTRFSRKKYESCS.

The protein belongs to the isochorismate synthase family. As to quaternary structure, monomer. The cofactor is Mg(2+). In terms of tissue distribution, leaves.

It is found in the plastid. It localises to the chloroplast. It carries out the reaction chorismate = isochorismate. It participates in siderophore biosynthesis; salicylate biosynthesis. Its function is as follows. Isochorismate synthase involved in the synthesis of salicylic acid (SA) required for both local and systemic acquired resistance (LAR and SAR) while SA synthesized through the phenylalanine ammonium lyase (PAL) pathway seems to potentiate plant cell death. Also involved in phylloquinone (vitamin K1) synthesis. Has no isochorismate pyruvate lyase (IPL) activity. This chain is Isochorismate synthase 1, chloroplastic (ICS1), found in Arabidopsis thaliana (Mouse-ear cress).